Here is a 517-residue protein sequence, read N- to C-terminus: Maturase K (517 aa).

Belongs to the intron maturase 2 family. MatK subfamily.

The protein localises to the plastid. Its subcellular location is the chloroplast. Functionally, usually encoded in the trnK tRNA gene intron. Probably assists in splicing its own and other chloroplast group II introns. This chain is Maturase K, found in Juncus effusus (Soft rush).